The following is a 157-amino-acid chain: Alanyl-tRNA editing protein AlaX-S (157 aa).

Residues H9, H13, C116, and H120 each contribute to the Zn(2+) site.

Belongs to the class-II aminoacyl-tRNA synthetase family. Editing domain AlaX-S subfamily. In terms of assembly, monomer and homodimer; the dimer is less active in tRNA editing and does not have a zinc ion associated with it. Another report shows only a monomeric form. Zn(2+) serves as cofactor.

It localises to the cytoplasm. Functions in trans to edit the amino acid moiety from mischarged charged Ser-tRNA(Ala). Has little activity against Gly-tRNA(Ala). This Pyrococcus horikoshii (strain ATCC 700860 / DSM 12428 / JCM 9974 / NBRC 100139 / OT-3) protein is Alanyl-tRNA editing protein AlaX-S (alaXS).